Reading from the N-terminus, the 485-residue chain is DNA polymerase subunit gamma-2 (485 aa).

The disordered stretch occupies residues Arg-28 to Glu-67.

As to quaternary structure, heterotrimer composed of a catalytic subunit and a homodimer of accessory subunits (POLG:POLG2).

It localises to the mitochondrion. It is found in the mitochondrion matrix. Its subcellular location is the mitochondrion nucleoid. Functionally, accessory subunit of DNA polymerase gamma solely responsible for replication of mitochondrial DNA (mtDNA). Acts as an allosteric regulator of the holoenzyme activities. Enhances the polymerase activity and the processivity of POLG by increasing its interactions with the DNA template. Suppresses POLG exonucleolytic proofreading especially toward homopolymeric templates bearing mismatched termini. Binds to single-stranded DNA. The polypeptide is DNA polymerase subunit gamma-2 (POLG2) (Bos taurus (Bovine)).